Here is a 426-residue protein sequence, read N- to C-terminus: Phosphomethylpyrimidine synthase (426 aa).

Substrate-binding positions include asparagine 65, methionine 94, tyrosine 123, histidine 162, 184 to 186 (SRG), 225 to 228 (DGMR), and glutamate 264. A Zn(2+)-binding site is contributed by histidine 268. Substrate is bound at residue tyrosine 291. Histidine 332 contacts Zn(2+). [4Fe-4S] cluster contacts are provided by cysteine 408, cysteine 411, and cysteine 415.

The protein belongs to the ThiC family. [4Fe-4S] cluster is required as a cofactor.

The enzyme catalyses 5-amino-1-(5-phospho-beta-D-ribosyl)imidazole + S-adenosyl-L-methionine = 4-amino-2-methyl-5-(phosphooxymethyl)pyrimidine + CO + 5'-deoxyadenosine + formate + L-methionine + 3 H(+). Its pathway is cofactor biosynthesis; thiamine diphosphate biosynthesis. Its function is as follows. Catalyzes the synthesis of the hydroxymethylpyrimidine phosphate (HMP-P) moiety of thiamine from aminoimidazole ribotide (AIR) in a radical S-adenosyl-L-methionine (SAM)-dependent reaction. The sequence is that of Phosphomethylpyrimidine synthase from Methanococcus maripaludis (strain DSM 14266 / JCM 13030 / NBRC 101832 / S2 / LL).